The primary structure comprises 1066 residues: Isoleucine--tRNA ligase (1066 aa).

Positions 49–59 match the 'HIGH' region motif; the sequence is PYVSGAIHLGT. The short motif at 625-629 is the 'KMSKS' region element; that stretch reads KMSKS. Lysine 628 contributes to the ATP binding site.

Belongs to the class-I aminoacyl-tRNA synthetase family. IleS type 2 subfamily. Monomer. Zn(2+) is required as a cofactor.

It localises to the cytoplasm. It catalyses the reaction tRNA(Ile) + L-isoleucine + ATP = L-isoleucyl-tRNA(Ile) + AMP + diphosphate. In terms of biological role, catalyzes the attachment of isoleucine to tRNA(Ile). As IleRS can inadvertently accommodate and process structurally similar amino acids such as valine, to avoid such errors it has two additional distinct tRNA(Ile)-dependent editing activities. One activity is designated as 'pretransfer' editing and involves the hydrolysis of activated Val-AMP. The other activity is designated 'posttransfer' editing and involves deacylation of mischarged Val-tRNA(Ile). In Pyrococcus furiosus (strain ATCC 43587 / DSM 3638 / JCM 8422 / Vc1), this protein is Isoleucine--tRNA ligase.